Consider the following 620-residue polypeptide: Bicaudal D-related protein homolog (620 aa).

Residues 23–41 (NNNNNSIVGGSSSSSSGGN) show a composition bias toward low complexity. The segment at 23–53 (NNNNNSIVGGSSSSSSGGNKSKRPRQFGQYS) is disordered. 2 coiled-coil regions span residues 120–331 (AAEL…LSER) and 461–575 (VLEQ…LIDE). Composition is skewed to basic and acidic residues over residues 493 to 503 (KEERDQARGDL) and 509 to 528 (RDELLSKAQTERDAANDRRT). The tract at residues 493-528 (KEERDQARGDLEDNTDRDELLSKAQTERDAANDRRT) is disordered.

The protein belongs to the BICDR family. May homodimerize but does not interact with BicD. May interact with eEF1gamma; The interaction is probably indirect.

Functions redundantly with BicD. Involved in formation and/or development of mechanosensory organs during metamorphosis. During macrochaetae development, together with BicD, involved in Rab 6 and Spn-F stability and distribution and actin cytoskeleton organization. The polypeptide is Bicaudal D-related protein homolog (Drosophila melanogaster (Fruit fly)).